Consider the following 242-residue polypeptide: Small ribosomal subunit protein uS2 (242 aa).

Belongs to the universal ribosomal protein uS2 family.

This chain is Small ribosomal subunit protein uS2, found in Shouchella clausii (strain KSM-K16) (Alkalihalobacillus clausii).